Consider the following 65-residue polypeptide: Large ribosomal subunit protein uL29c (65 aa).

The protein belongs to the universal ribosomal protein uL29 family.

It localises to the plastid. It is found in the chloroplast. The sequence is that of Large ribosomal subunit protein uL29c (rpl29) from Guillardia theta (Cryptophyte).